The primary structure comprises 114 residues: Flagellar hook-basal body complex protein FliE (114 aa).

This sequence belongs to the FliE family.

Its subcellular location is the bacterial flagellum basal body. The sequence is that of Flagellar hook-basal body complex protein FliE from Burkholderia lata (strain ATCC 17760 / DSM 23089 / LMG 22485 / NCIMB 9086 / R18194 / 383).